The primary structure comprises 631 residues: Glutamyl-tRNA(Gln) amidotransferase subunit E (631 aa).

This sequence belongs to the GatB/GatE family. GatE subfamily. As to quaternary structure, heterodimer of GatD and GatE.

It carries out the reaction L-glutamyl-tRNA(Gln) + L-glutamine + ATP + H2O = L-glutaminyl-tRNA(Gln) + L-glutamate + ADP + phosphate + H(+). Its function is as follows. Allows the formation of correctly charged Gln-tRNA(Gln) through the transamidation of misacylated Glu-tRNA(Gln) in organisms which lack glutaminyl-tRNA synthetase. The reaction takes place in the presence of glutamine and ATP through an activated gamma-phospho-Glu-tRNA(Gln). The GatDE system is specific for glutamate and does not act on aspartate. In Methanococcus maripaludis (strain C6 / ATCC BAA-1332), this protein is Glutamyl-tRNA(Gln) amidotransferase subunit E.